The chain runs to 447 residues: MTSIKHLLINAKKYDQKEFEIKAWVASNRGNTNIRFVEINDGSTIKNLQVVIKKEIMSFLEVDKIRLGAAIHVKGVLKYTPGMAQEIELNADKFILLKNTDEDFPIQKKETSLEALREIPHLRHRTTTLRAIMLIRSTLALEIHKFYNERGYLWVSSPIITGNDGEGAGESFVVDDESKDFFFNKKATLGVTGQLHAEAYALGFSKVYTFAPTFRAENSNTTKHAAEFWMMEPEVAFFDLKDLIKMSDDMLRQVIKRTVEAHPHEFEFFEKNKPGLLKNLNLFLNNKLSILEYREAIKILEKVKDRFEDKNIFFGKDLATEHEKYLAEKHIQGPVAVINYPKSFKAFYMFQNEDNETVAAYDLLVPGIGEVIGGSKRETRYEKLVQRVKDLKINQEDLQWYLDLRRFGQASSAGFGLGFERLIMYITGTENIRDTIPFPRTPKNMKM.

Belongs to the class-II aminoacyl-tRNA synthetase family. In terms of assembly, homodimer.

It is found in the cytoplasm. The catalysed reaction is tRNA(Asn) + L-asparagine + ATP = L-asparaginyl-tRNA(Asn) + AMP + diphosphate + H(+). The polypeptide is Asparagine--tRNA ligase (Mycoplasma mobile (strain ATCC 43663 / 163K / NCTC 11711) (Mesomycoplasma mobile)).